A 265-amino-acid chain; its full sequence is Shikimate dehydrogenase (NADP(+)) (265 aa).

Shikimate contacts are provided by residues 15–17 and threonine 62; that span reads SKS. Residue lysine 66 is the Proton acceptor of the active site. Shikimate is bound by residues asparagine 87 and aspartate 102. Residues 127-131, 151-156, and methionine 212 each bind NADP(+); these read GAGGA and NRTVSR. Tyrosine 214 contacts shikimate. Position 234 (glycine 234) interacts with NADP(+).

The protein belongs to the shikimate dehydrogenase family. As to quaternary structure, homodimer.

The catalysed reaction is shikimate + NADP(+) = 3-dehydroshikimate + NADPH + H(+). The protein operates within metabolic intermediate biosynthesis; chorismate biosynthesis; chorismate from D-erythrose 4-phosphate and phosphoenolpyruvate: step 4/7. Involved in the biosynthesis of the chorismate, which leads to the biosynthesis of aromatic amino acids. Catalyzes the reversible NADPH linked reduction of 3-dehydroshikimate (DHSA) to yield shikimate (SA). The polypeptide is Shikimate dehydrogenase (NADP(+)) (Thiobacillus denitrificans (strain ATCC 25259 / T1)).